The primary structure comprises 423 residues: Gamma-glutamyl phosphate reductase (423 aa).

It belongs to the gamma-glutamyl phosphate reductase family.

The protein localises to the cytoplasm. The catalysed reaction is L-glutamate 5-semialdehyde + phosphate + NADP(+) = L-glutamyl 5-phosphate + NADPH + H(+). It participates in amino-acid biosynthesis; L-proline biosynthesis; L-glutamate 5-semialdehyde from L-glutamate: step 2/2. In terms of biological role, catalyzes the NADPH-dependent reduction of L-glutamate 5-phosphate into L-glutamate 5-semialdehyde and phosphate. The product spontaneously undergoes cyclization to form 1-pyrroline-5-carboxylate. In Pseudomonas putida (strain ATCC 47054 / DSM 6125 / CFBP 8728 / NCIMB 11950 / KT2440), this protein is Gamma-glutamyl phosphate reductase.